Reading from the N-terminus, the 218-residue chain is Protein GrpE (218 aa).

The interval Met1–Gly78 is disordered. Residues Pro14–Ala58 are compositionally biased toward low complexity.

It belongs to the GrpE family. In terms of assembly, homodimer.

It localises to the cytoplasm. Functionally, participates actively in the response to hyperosmotic and heat shock by preventing the aggregation of stress-denatured proteins, in association with DnaK and GrpE. It is the nucleotide exchange factor for DnaK and may function as a thermosensor. Unfolded proteins bind initially to DnaJ; upon interaction with the DnaJ-bound protein, DnaK hydrolyzes its bound ATP, resulting in the formation of a stable complex. GrpE releases ADP from DnaK; ATP binding to DnaK triggers the release of the substrate protein, thus completing the reaction cycle. Several rounds of ATP-dependent interactions between DnaJ, DnaK and GrpE are required for fully efficient folding. The polypeptide is Protein GrpE (Bifidobacterium longum (strain NCC 2705)).